Consider the following 81-residue polypeptide: Large ribosomal subunit protein bL31 (81 aa).

Zn(2+) contacts are provided by Cys-16, Cys-18, Cys-38, and Cys-41.

It belongs to the bacterial ribosomal protein bL31 family. Type A subfamily. As to quaternary structure, part of the 50S ribosomal subunit. It depends on Zn(2+) as a cofactor.

Binds the 23S rRNA. The polypeptide is Large ribosomal subunit protein bL31 (Mycobacterium sp. (strain JLS)).